A 439-amino-acid chain; its full sequence is Orphan methyltransferase M.SPRI (439 aa).

Residues 4 to 436 (LRVMSLFSGI…KELIHTYINK (433 aa)) form the SAM-dependent MTase C5-type domain. Cys-78 is a catalytic residue.

The protein belongs to the class I-like SAM-binding methyltransferase superfamily. C5-methyltransferase family. Monomer.

It carries out the reaction a 2'-deoxycytidine in DNA + S-adenosyl-L-methionine = a 5-methyl-2'-deoxycytidine in DNA + S-adenosyl-L-homocysteine + H(+). Functionally, a methyltransferase that methylates the C-1 in the sequence 5'-GGCC-3' and both cytosines in the sequence 5'-CCGG-3'. A methyltransferase that methylates C-3 within the sequence 5'-GGCC-3', C-1 in 5'-CCGG-3' and C-2 in 5'-CCWGG-3'. Modification confers resistance against restriction enzymes that recognize these sequences. This is Orphan methyltransferase M.SPRI from Bacillus phage SPR (Bacteriophage SPR).